We begin with the raw amino-acid sequence, 288 residues long: ATP phosphoribosyltransferase (288 aa).

This sequence belongs to the ATP phosphoribosyltransferase family. Long subfamily. Mg(2+) serves as cofactor.

The protein localises to the cytoplasm. The catalysed reaction is 1-(5-phospho-beta-D-ribosyl)-ATP + diphosphate = 5-phospho-alpha-D-ribose 1-diphosphate + ATP. It functions in the pathway amino-acid biosynthesis; L-histidine biosynthesis; L-histidine from 5-phospho-alpha-D-ribose 1-diphosphate: step 1/9. Feedback inhibited by histidine. In terms of biological role, catalyzes the condensation of ATP and 5-phosphoribose 1-diphosphate to form N'-(5'-phosphoribosyl)-ATP (PR-ATP). Has a crucial role in the pathway because the rate of histidine biosynthesis seems to be controlled primarily by regulation of HisG enzymatic activity. In Methanocaldococcus jannaschii (strain ATCC 43067 / DSM 2661 / JAL-1 / JCM 10045 / NBRC 100440) (Methanococcus jannaschii), this protein is ATP phosphoribosyltransferase (hisG).